A 131-amino-acid chain; its full sequence is Hyastatin (131 aa).

The N-terminal stretch at 1-16 is a signal peptide; that stretch reads MRVLLILVSLAALAHA. Cystine bridges form between cysteine 103–cysteine 117, cysteine 107–cysteine 124, and cysteine 118–cysteine 125. A Lysine amide modification is found at lysine 130.

In terms of tissue distribution, strongly expressed in hemocytes, with weaker expression in gills and epidermis. Expressed at low levels in hepatopancreas.

It is found in the cytoplasmic granule. Its function is as follows. Antimicrobial peptide. Has strong antibacterial activity against the Gram-positive bacterium C.glutamicum (MIC=0.4 uM) and the Gram-negative bacterium E.coli (MIC=12.5 uM). Has weak antibacterial activity against the Gram-positive bacterium S.aureus (MIC&gt;50 uM) and the Gram-negative bacterium P.aeruginosa (MIC&gt;50 uM). Has antifungal activity against S.cerevisiae (MIC=12.5) and C.albicans (MIC=6.3 uM). Has weak antifungal activity against the mold B.cinerea. Presents chitin-binding activity. In Hyas araneus (Atlantic lyre crab), this protein is Hyastatin.